The chain runs to 273 residues: MERSVFYVSDGTAITAEVLGHAVLSQFPVNTVSYTLPFVESEVRAKAVCEQINTLYQQTGVRPLVFYSIVTPTVRNIITSSDGFCQDIVQALVAPLQEELNIPPTPVANRTHGLTANNLGKYDARIAAIDYTLAHDDGISLRNLDQAQVILLGVSRCGKTPTSLYLAMQFGIRAANYPFIADDMDNLRLPDALKPFQHKLFGLTIDAERLAAIREERRGNSRYASLRQCRMELNEVEALFRKHQIKYLNTTNYSVEEISAKIIDILGMSRRMY.

153–160 serves as a coordination point for ADP; the sequence is GVSRCGKT.

This sequence belongs to the pyruvate, phosphate/water dikinase regulatory protein family. PSRP subfamily.

It carries out the reaction [pyruvate, water dikinase] + ADP = [pyruvate, water dikinase]-phosphate + AMP + H(+). The catalysed reaction is [pyruvate, water dikinase]-phosphate + phosphate + H(+) = [pyruvate, water dikinase] + diphosphate. Its function is as follows. Bifunctional serine/threonine kinase and phosphorylase involved in the regulation of the phosphoenolpyruvate synthase (PEPS) by catalyzing its phosphorylation/dephosphorylation. The sequence is that of Putative phosphoenolpyruvate synthase regulatory protein from Pectobacterium atrosepticum (strain SCRI 1043 / ATCC BAA-672) (Erwinia carotovora subsp. atroseptica).